The chain runs to 211 residues: Thymidylate kinase (211 aa).

10–17 (GPDGAGKT) provides a ligand contact to ATP.

It belongs to the thymidylate kinase family.

It carries out the reaction dTMP + ATP = dTDP + ADP. Its function is as follows. Phosphorylation of dTMP to form dTDP in both de novo and salvage pathways of dTTP synthesis. This chain is Thymidylate kinase, found in Lactococcus lactis subsp. cremoris (strain SK11).